The primary structure comprises 267 residues: Dihydropteroate synthase (267 aa).

In terms of domain architecture, Pterin-binding spans 1 to 251 (MTKTKIMGIL…NVELNAKLAK (251 aa)). Position 11 (asparagine 11) interacts with Mg(2+). (7,8-dihydropterin-6-yl)methyl diphosphate is bound by residues threonine 51, aspartate 84, asparagine 103, aspartate 167, lysine 203, and 239–241 (RVH).

It belongs to the DHPS family. Homodimer. Mg(2+) serves as cofactor.

The enzyme catalyses (7,8-dihydropterin-6-yl)methyl diphosphate + 4-aminobenzoate = 7,8-dihydropteroate + diphosphate. Its pathway is cofactor biosynthesis; tetrahydrofolate biosynthesis; 7,8-dihydrofolate from 2-amino-4-hydroxy-6-hydroxymethyl-7,8-dihydropteridine diphosphate and 4-aminobenzoate: step 1/2. Its function is as follows. Catalyzes the condensation of para-aminobenzoate (pABA) with 6-hydroxymethyl-7,8-dihydropterin diphosphate (DHPt-PP) to form 7,8-dihydropteroate (H2Pte), the immediate precursor of folate derivatives. The chain is Dihydropteroate synthase (folP) from Staphylococcus aureus (strain MRSA252).